We begin with the raw amino-acid sequence, 315 residues long: Cytochrome c biogenesis protein CcsA (315 aa).

The next 7 helical transmembrane spans lie at 17 to 37 (LGFA…WAVA), 72 to 92 (ISNL…AQLF), 101 to 121 (IVSA…SFVL), 146 to 166 (VIMC…GVFL), 221 to 241 (SITA…VWAN), 255 to 272 (TWAL…HTRI), and 282 to 302 (AILA…VNLL).

The protein belongs to the CcmF/CycK/Ccl1/NrfE/CcsA family. May interact with ccs1.

The protein localises to the cellular thylakoid membrane. Its function is as follows. Required during biogenesis of c-type cytochromes (cytochrome c6 and cytochrome f) at the step of heme attachment. This is Cytochrome c biogenesis protein CcsA from Prochlorococcus marinus (strain NATL2A).